Here is a 233-residue protein sequence, read N- to C-terminus: Putative T-box protein 41 (233 aa).

A DNA-binding region (T-box) is located at residues 1–146 (MTVTRNGCRI…MNPHARHFLK (146 aa)).

The protein localises to the nucleus. This chain is Putative T-box protein 41 (tbx-41), found in Caenorhabditis elegans.